The chain runs to 322 residues: Manganese-dependent ADP-ribose/CDP-alcohol diphosphatase (322 aa).

Zn(2+)-binding residues include aspartate 13, glutamine 15, aspartate 60, asparagine 96, histidine 228, histidine 265, and histidine 267.

The protein belongs to the ADPRibase-Mn family. In terms of assembly, monomer. Mg(2+) is required as a cofactor.

The enzyme catalyses CDP-choline + H2O = phosphocholine + CMP + 2 H(+). It carries out the reaction ADP-D-ribose + H2O = D-ribose 5-phosphate + AMP + 2 H(+). It catalyses the reaction CDP-glycerol + H2O = sn-glycerol 3-phosphate + CMP + 2 H(+). Its function is as follows. Hydrolyzes ADP-ribose, IDP-ribose, CDP-glycerol, CDP-choline and CDP-ethanolamine, but not other non-reducing ADP-sugars or CDP-glucose. In Danio rerio (Zebrafish), this protein is Manganese-dependent ADP-ribose/CDP-alcohol diphosphatase (adprm).